The following is a 576-amino-acid chain: Sulfite reductase [NADPH] hemoprotein beta-component (576 aa).

The [4Fe-4S] cluster site is built by Cys435, Cys441, Cys480, and Cys484. Siroheme is bound at residue Cys484.

This sequence belongs to the nitrite and sulfite reductase 4Fe-4S domain family. In terms of assembly, alpha(8)-beta(8). The alpha component is a flavoprotein, the beta component is a hemoprotein. Requires siroheme as cofactor. [4Fe-4S] cluster is required as a cofactor.

The catalysed reaction is hydrogen sulfide + 3 NADP(+) + 3 H2O = sulfite + 3 NADPH + 4 H(+). It participates in sulfur metabolism; hydrogen sulfide biosynthesis; hydrogen sulfide from sulfite (NADPH route): step 1/1. Its function is as follows. Component of the sulfite reductase complex that catalyzes the 6-electron reduction of sulfite to sulfide. This is one of several activities required for the biosynthesis of L-cysteine from sulfate. In Photorhabdus laumondii subsp. laumondii (strain DSM 15139 / CIP 105565 / TT01) (Photorhabdus luminescens subsp. laumondii), this protein is Sulfite reductase [NADPH] hemoprotein beta-component.